A 56-amino-acid chain; its full sequence is Conotoxin reg3.9 (56 aa).

The first 8 residues, Leu-1 to Leu-8, serve as a signal peptide directing secretion. The tract at residues Leu-1–Arg-22 is disordered. A propeptide spanning residues Pro-9–Gly-40 is cleaved from the precursor. 3 disulfides stabilise this stretch: Cys-41–Cys-55, Cys-42–Cys-53, and Cys-47–Cys-56.

The protein belongs to the conotoxin M superfamily. As to expression, expressed by the venom duct.

The protein resides in the secreted. This chain is Conotoxin reg3.9, found in Conus regius (Crown cone).